Consider the following 548-residue polypeptide: MNKRAMLGAIGLAFGLLAAPIGASAKGESIVWNEQWKTPSFVSGSLLNGGEQALEELVYQYVDRENGTFRLGGRARDRLALIGKQTDELGHTVMRFEQRHHGIPVYGTMLAAHVKDGELIALSGSLIPNLDGQPRLKKAKTVTVQQAEAIAEQDVTETVTKERPTTENGERTRLVIYPTDGTARLAYEVNVRFLTPVPGNWVYIIDATDGAILNKFNQIDSRQPGGGQPVAGASTVGVGRGVLGDQKYINTTYSSYYGYYYLQDNTRGSGIFTYDGRNRTVLPGSLWTDGDNQFTASYDAAAVDAHYYAGVVYDYYKNVHGRLSYDGSNAAIRSTVHYGRGYNNAFWNGSQMVYGDGDGQTFLPFSGGIDVVGHELTHAVTDYTAGLVYQNESGAINEAMSDIFGTLVEFYANRNPDWEIGEDIYTPGVAGDALRSMSDPAKYGDPDHYSKRYTGTQDNGGVHTNSGIINKAAYLLSQGGVHYGVSVNGIGRDKMGKIFYRALVYYLTPTSNFSQLRAACVQAAADLYGSTSQEVNSVKQAFNAVGVY.

An N-terminal signal peptide occupies residues 1–25 (MNKRAMLGAIGLAFGLLAAPIGASA). The propeptide at 26–229 (KGESIVWNEQ…DSRQPGGGQP (204 aa)) is activation peptide. Residues D289, D291, Q293, and D370 each contribute to the Ca(2+) site. H374 is a Zn(2+) binding site. The active site involves E375. 2 residues coordinate Zn(2+): H378 and E398. The Ca(2+) site is built by E409, N415, D417, E419, E422, Y425, T426, V429, and D432. H463 functions as the Proton donor in the catalytic mechanism.

The protein belongs to the peptidase M4 family. It depends on Ca(2+) as a cofactor. Zn(2+) serves as cofactor.

It is found in the secreted. With respect to regulation, its casein hydrolytic activity is inhibited almost completely by a chelating agent (EDTA), whereas neither diisopropyl fluorophosphate nor phenylmethylsulfonyl fluoride inhibit the proteolytic activity in vitro. In terms of biological role, extracellular zinc metalloprotease. This chain is Thermostable neutral protease NprT (nprT), found in Geobacillus stearothermophilus (Bacillus stearothermophilus).